The following is a 308-amino-acid chain: Glutaminase (308 aa).

Ser66, Asn117, Glu161, Asn168, Tyr192, Tyr244, and Val262 together coordinate substrate.

The protein belongs to the glutaminase family. In terms of assembly, homotetramer.

It carries out the reaction L-glutamine + H2O = L-glutamate + NH4(+). This is Glutaminase from Salmonella agona (strain SL483).